Reading from the N-terminus, the 169-residue chain is 6,7-dimethyl-8-ribityllumazine synthase (169 aa).

Residues tyrosine 30, 61 to 63, and 90 to 92 contribute to the 5-amino-6-(D-ribitylamino)uracil site; these read ALE and CVI. 95–96 contributes to the (2S)-2-hydroxy-3-oxobutyl phosphate binding site; that stretch reads ET. Histidine 98 acts as the Proton donor in catalysis. Asparagine 123 lines the 5-amino-6-(D-ribitylamino)uracil pocket. Arginine 137 provides a ligand contact to (2S)-2-hydroxy-3-oxobutyl phosphate.

Belongs to the DMRL synthase family.

The catalysed reaction is (2S)-2-hydroxy-3-oxobutyl phosphate + 5-amino-6-(D-ribitylamino)uracil = 6,7-dimethyl-8-(1-D-ribityl)lumazine + phosphate + 2 H2O + H(+). The protein operates within cofactor biosynthesis; riboflavin biosynthesis; riboflavin from 2-hydroxy-3-oxobutyl phosphate and 5-amino-6-(D-ribitylamino)uracil: step 1/2. Functionally, catalyzes the formation of 6,7-dimethyl-8-ribityllumazine by condensation of 5-amino-6-(D-ribitylamino)uracil with 3,4-dihydroxy-2-butanone 4-phosphate. This is the penultimate step in the biosynthesis of riboflavin. In Methylorubrum populi (strain ATCC BAA-705 / NCIMB 13946 / BJ001) (Methylobacterium populi), this protein is 6,7-dimethyl-8-ribityllumazine synthase.